The chain runs to 239 residues: tRNA uridine(34) hydroxylase (239 aa).

In terms of domain architecture, Rhodanese spans 124-214; the sequence is QGRELVMLDT…GILKYFEETD (91 aa). Cys-178 acts as the Cysteine persulfide intermediate in catalysis.

The protein belongs to the TrhO family.

The catalysed reaction is uridine(34) in tRNA + AH2 + O2 = 5-hydroxyuridine(34) in tRNA + A + H2O. In terms of biological role, catalyzes oxygen-dependent 5-hydroxyuridine (ho5U) modification at position 34 in tRNAs. This chain is tRNA uridine(34) hydroxylase, found in Bordetella parapertussis (strain 12822 / ATCC BAA-587 / NCTC 13253).